The primary structure comprises 147 residues: Large ribosomal subunit protein uL22 (147 aa).

Positions 110 to 147 (EEKKTVAKKAPAAKKTTTTKAPAKKTTSTKKATAKKES) are disordered. Residues 117-140 (KKAPAAKKTTTTKAPAKKTTSTKK) are compositionally biased toward low complexity.

Belongs to the universal ribosomal protein uL22 family. Part of the 50S ribosomal subunit.

In terms of biological role, this protein binds specifically to 23S rRNA; its binding is stimulated by other ribosomal proteins, e.g. L4, L17, and L20. It is important during the early stages of 50S assembly. It makes multiple contacts with different domains of the 23S rRNA in the assembled 50S subunit and ribosome. The globular domain of the protein is located near the polypeptide exit tunnel on the outside of the subunit, while an extended beta-hairpin is found that lines the wall of the exit tunnel in the center of the 70S ribosome. The polypeptide is Large ribosomal subunit protein uL22 (Campylobacter jejuni subsp. jejuni serotype O:6 (strain 81116 / NCTC 11828)).